The following is a 268-amino-acid chain: Ribosome maturation factor RimP (268 aa).

2 disordered regions span residues 1-41 (MGSA…GRGG) and 223-268 (LVEP…EMTR). Residues 32–41 (PSGSARGRGG) show a composition bias toward low complexity. The segment covering 248–257 (ESNDDGREAG) has biased composition (basic and acidic residues).

Belongs to the RimP family.

The protein resides in the cytoplasm. Required for maturation of 30S ribosomal subunits. In Frankia casuarinae (strain DSM 45818 / CECT 9043 / HFP020203 / CcI3), this protein is Ribosome maturation factor RimP.